A 166-amino-acid chain; its full sequence is MSERNTLFSRPLPIALFILVALVADQAIKYLVEAFLPFQEAVPVVPMLALYRTYNYGVAFSMLSGMEGWFIVGMRLAVVAFVLWLWRRTPKDRFFAHLGYAMIIAGALGNLVDRLLFGYVIDYILFHTATWSFAVFNLADSFITVGAGAIILDELLQTKKTRSLKL.

The next 3 helical transmembrane spans lie at 12 to 32 (LPIA…KYLV), 66 to 86 (MEGW…LWLW), and 101 to 121 (AMII…GYVI). Active-site residues include Asp122 and Asp140. Residues 132-152 (SFAVFNLADSFITVGAGAIIL) traverse the membrane as a helical segment.

Belongs to the peptidase A8 family.

It localises to the cell inner membrane. The enzyme catalyses Release of signal peptides from bacterial membrane prolipoproteins. Hydrolyzes -Xaa-Yaa-Zaa-|-(S,diacylglyceryl)Cys-, in which Xaa is hydrophobic (preferably Leu), and Yaa (Ala or Ser) and Zaa (Gly or Ala) have small, neutral side chains.. It functions in the pathway protein modification; lipoprotein biosynthesis (signal peptide cleavage). This protein specifically catalyzes the removal of signal peptides from prolipoproteins. This chain is Lipoprotein signal peptidase, found in Sinorhizobium fredii (strain NBRC 101917 / NGR234).